Here is a 563-residue protein sequence, read N- to C-terminus: Bifunctional dihydrofolate reductase-thymidylate synthase (563 aa).

The DHFR domain occupies 3 to 195 (KFNIIAAINN…ILLRFQEYSV (193 aa)). 117-124 (GGGVIYDL) provides a ligand contact to NADP(+). Positions 275-563 (YIELVKTIME…CPSISAEMIA (289 aa)) are thymidylate synthase. Residue arginine 292 participates in dUMP binding. Residue cysteine 435 is part of the active site. DUMP contacts are provided by residues histidine 436, 464-468 (QRSWD), asparagine 474, and 504-506 (HIY).

The protein in the N-terminal section; belongs to the dihydrofolate reductase family. This sequence in the C-terminal section; belongs to the thymidylate synthase family.

The enzyme catalyses (6S)-5,6,7,8-tetrahydrofolate + NADP(+) = 7,8-dihydrofolate + NADPH + H(+). The catalysed reaction is dUMP + (6R)-5,10-methylene-5,6,7,8-tetrahydrofolate = 7,8-dihydrofolate + dTMP. It functions in the pathway cofactor biosynthesis; tetrahydrofolate biosynthesis; 5,6,7,8-tetrahydrofolate from 7,8-dihydrofolate: step 1/1. Functionally, bifunctional enzyme. Involved in de novo dTMP biosynthesis. Key enzyme in folate metabolism. Catalyzes an essential reaction for de novo glycine and purine synthesis, DNA precursor synthesis, and for the conversion of dUMP to dTMP. This is Bifunctional dihydrofolate reductase-thymidylate synthase from Acanthamoeba polyphaga mimivirus (APMV).